The sequence spans 364 residues: DNA replication and repair protein RecF (364 aa).

Residue 30-37 participates in ATP binding; sequence GRNAQGKT.

The protein belongs to the RecF family.

The protein localises to the cytoplasm. The RecF protein is involved in DNA metabolism; it is required for DNA replication and normal SOS inducibility. RecF binds preferentially to single-stranded, linear DNA. It also seems to bind ATP. The sequence is that of DNA replication and repair protein RecF from Pelotomaculum thermopropionicum (strain DSM 13744 / JCM 10971 / SI).